Consider the following 343-residue polypeptide: Small ribosomal subunit biogenesis GTPase RsgA (343 aa).

Positions 116–275 constitute a CP-type G domain; it reads RGQLKPVAAN…LIDSPGIREF (160 aa). Residues 163–166 and 217–225 contribute to the GTP site; these read NKAD and GQSGVGKSS. Zn(2+) contacts are provided by cysteine 299, cysteine 304, histidine 306, and cysteine 312.

It belongs to the TRAFAC class YlqF/YawG GTPase family. RsgA subfamily. As to quaternary structure, monomer. Associates with 30S ribosomal subunit, binds 16S rRNA. It depends on Zn(2+) as a cofactor.

It is found in the cytoplasm. Its function is as follows. One of several proteins that assist in the late maturation steps of the functional core of the 30S ribosomal subunit. Helps release RbfA from mature subunits. May play a role in the assembly of ribosomal proteins into the subunit. Circularly permuted GTPase that catalyzes slow GTP hydrolysis, GTPase activity is stimulated by the 30S ribosomal subunit. The sequence is that of Small ribosomal subunit biogenesis GTPase RsgA from Azotobacter vinelandii (strain DJ / ATCC BAA-1303).